Consider the following 230-residue polypeptide: Large ribosomal subunit protein uL1 (230 aa).

It belongs to the universal ribosomal protein uL1 family. As to quaternary structure, part of the 50S ribosomal subunit.

Its function is as follows. Binds directly to 23S rRNA. The L1 stalk is quite mobile in the ribosome, and is involved in E site tRNA release. In terms of biological role, protein L1 is also a translational repressor protein, it controls the translation of the L11 operon by binding to its mRNA. The chain is Large ribosomal subunit protein uL1 from Ligilactobacillus salivarius (strain UCC118) (Lactobacillus salivarius).